We begin with the raw amino-acid sequence, 547 residues long: Chaperonin GroEL (547 aa).

ATP is bound by residues Thr-30–Pro-33, Lys-51, Asp-87–Thr-91, Gly-415, and Asp-495.

This sequence belongs to the chaperonin (HSP60) family. As to quaternary structure, forms a cylinder of 14 subunits composed of two heptameric rings stacked back-to-back. Interacts with the co-chaperonin GroES.

The protein localises to the cytoplasm. It carries out the reaction ATP + H2O + a folded polypeptide = ADP + phosphate + an unfolded polypeptide.. In terms of biological role, together with its co-chaperonin GroES, plays an essential role in assisting protein folding. The GroEL-GroES system forms a nano-cage that allows encapsulation of the non-native substrate proteins and provides a physical environment optimized to promote and accelerate protein folding. The protein is Chaperonin GroEL of Bartonella quintana (strain Toulouse) (Rochalimaea quintana).